Here is a 93-residue protein sequence, read N- to C-terminus: Alpha-defensin 5 (93 aa).

The first 19 residues, 1-19, serve as a signal peptide directing secretion; it reads MKTFVLLSALVLLAFQVQA. Residues 20–58 constitute a propeptide that is removed on maturation; sequence DPIHKTDEETNTEEQPGEEDQAVSISFGGQEGSALHEEL. 3 disulfides stabilise this stretch: Cys64/Cys92, Cys66/Cys81, and Cys71/Cys91.

It belongs to the alpha-defensin family.

The protein resides in the secreted. Its function is as follows. Probably contributes to the antimicrobial barrier function of the small bowel mucosa. The polypeptide is Alpha-defensin 5 (Defa5) (Mus musculus (Mouse)).